The sequence spans 89 residues: Large ribosomal subunit protein bL27 (89 aa).

Residues 1–21 form a disordered region; it reads MAHKKAGGSSRNGRDSESKRL.

The protein belongs to the bacterial ribosomal protein bL27 family.

This is Large ribosomal subunit protein bL27 from Brucella anthropi (strain ATCC 49188 / DSM 6882 / CCUG 24695 / JCM 21032 / LMG 3331 / NBRC 15819 / NCTC 12168 / Alc 37) (Ochrobactrum anthropi).